The following is a 261-amino-acid chain: 3-methyl-2-oxobutanoate hydroxymethyltransferase (261 aa).

Mg(2+) contacts are provided by Asp44 and Asp83. Residues 44 to 45, Asp83, and Lys113 contribute to the 3-methyl-2-oxobutanoate site; that span reads DS. Glu115 lines the Mg(2+) pocket. Residue Glu183 is the Proton acceptor of the active site.

It belongs to the PanB family. In terms of assembly, homodecamer; pentamer of dimers. The cofactor is Mg(2+).

It localises to the cytoplasm. It carries out the reaction 3-methyl-2-oxobutanoate + (6R)-5,10-methylene-5,6,7,8-tetrahydrofolate + H2O = 2-dehydropantoate + (6S)-5,6,7,8-tetrahydrofolate. It functions in the pathway cofactor biosynthesis; (R)-pantothenate biosynthesis; (R)-pantoate from 3-methyl-2-oxobutanoate: step 1/2. Its function is as follows. Catalyzes the reversible reaction in which hydroxymethyl group from 5,10-methylenetetrahydrofolate is transferred onto alpha-ketoisovalerate to form ketopantoate. This chain is 3-methyl-2-oxobutanoate hydroxymethyltransferase, found in Cyanothece sp. (strain PCC 7425 / ATCC 29141).